The chain runs to 341 residues: tRNA N6-adenosine threonylcarbamoyltransferase (341 aa).

Positions 114 and 118 each coordinate Fe cation. Substrate is bound by residues 136–140 (LVSGG), aspartate 170, glycine 183, aspartate 187, and asparagine 275. Aspartate 303 contributes to the Fe cation binding site.

Belongs to the KAE1 / TsaD family. Fe(2+) is required as a cofactor.

It is found in the cytoplasm. It catalyses the reaction L-threonylcarbamoyladenylate + adenosine(37) in tRNA = N(6)-L-threonylcarbamoyladenosine(37) in tRNA + AMP + H(+). In terms of biological role, required for the formation of a threonylcarbamoyl group on adenosine at position 37 (t(6)A37) in tRNAs that read codons beginning with adenine. Is involved in the transfer of the threonylcarbamoyl moiety of threonylcarbamoyl-AMP (TC-AMP) to the N6 group of A37, together with TsaE and TsaB. TsaD likely plays a direct catalytic role in this reaction. This chain is tRNA N6-adenosine threonylcarbamoyltransferase, found in Mycobacterium avium (strain 104).